The primary structure comprises 298 residues: Protoheme IX farnesyltransferase (298 aa).

9 helical membrane passes run 26–46, 52–72, 93–113, 120–140, 148–168, 174–194, 219–239, 241–261, and 278–298; these read VVSLIVFTAVIGMFLSVPGAV, IFGTVGISLVAGAAAALNCLV, VSVPETLFFLVLIGGFGLFML, LTMWLTLGTFVGYAIIYTVIL, IVIGGASGAMPPVLGWAAVTG, ALLLFLIIFAWTPPHFWALAL, LHVLLYTIILCVVTVLPYLTQ, SGLIYLGSVLILDAIFFYYAI, and YSIAYLALLFTALLVDHYFYF.

This sequence belongs to the UbiA prenyltransferase family. Protoheme IX farnesyltransferase subfamily.

It localises to the cell inner membrane. The catalysed reaction is heme b + (2E,6E)-farnesyl diphosphate + H2O = Fe(II)-heme o + diphosphate. It participates in porphyrin-containing compound metabolism; heme O biosynthesis; heme O from protoheme: step 1/1. Functionally, converts heme B (protoheme IX) to heme O by substitution of the vinyl group on carbon 2 of heme B porphyrin ring with a hydroxyethyl farnesyl side group. In Nitrosomonas europaea (strain ATCC 19718 / CIP 103999 / KCTC 2705 / NBRC 14298), this protein is Protoheme IX farnesyltransferase.